Consider the following 383-residue polypeptide: Mannitol-1-phosphate 5-dehydrogenase (383 aa).

3 to 14 (AVHFGAGNIGRG) serves as a coordination point for NAD(+).

The protein belongs to the mannitol dehydrogenase family.

It carries out the reaction D-mannitol 1-phosphate + NAD(+) = beta-D-fructose 6-phosphate + NADH + H(+). The polypeptide is Mannitol-1-phosphate 5-dehydrogenase (Lacticaseibacillus casei (strain BL23) (Lactobacillus casei)).